We begin with the raw amino-acid sequence, 382 residues long: MGIHGLAKLIADVAPAAIKEHDIKSYFGRKVAVDASMCIYQFLIAVRQDGNMLQNEDGETTSHLMGMFYRTIRMIEHGIKPVYVFDGKPPQMKSGELAKRSERRAEAEKLLEAAEEAGEVENIEKFNKRLVKVTKQHNEECKKLLTLMGVPYVDAPCEAEATCAALVKAGKVYAAATEDMDALTFGTPVLLRHLTASEAKKLPIQEFHLNRVMQDMGVSHEQFVDLCILLGSDYCETIRGIGPKRAIDLIRQHKSIEEIVDNIDLKKYPIPENWLHKEARQLFLEPEVVDTESTELKWIEPDEEGLVAFMCAEKQFSEDRIRNGAKKLAKNRQGSTQGRLDDFFKVTGSISSTKRKEVESKGSAKKKAKTAGTPAGKFKRGK.

Residues 1–104 form an N-domain region; that stretch reads MGIHGLAKLI…GELAKRSERR (104 aa). Aspartate 34 serves as a coordination point for Mg(2+). Positions 47 and 70 each coordinate DNA. Residues aspartate 86, glutamate 158, glutamate 160, aspartate 179, and aspartate 181 each contribute to the Mg(2+) site. The interval 122-253 is I-domain; that stretch reads NIEKFNKRLV…KRAIDLIRQH (132 aa). Residue glutamate 158 coordinates DNA. Residues glycine 231 and aspartate 233 each coordinate DNA. Aspartate 233 provides a ligand contact to Mg(2+). The interval 336-344 is interaction with PCNA; that stretch reads TQGRLDDFF. The interval 352–382 is disordered; sequence STKRKEVESKGSAKKKAKTAGTPAGKFKRGK.

The protein belongs to the XPG/RAD2 endonuclease family. FEN1 subfamily. As to quaternary structure, interacts with PCNA. Three molecules of fen1 bind to one PCNA trimer with each molecule binding to one PCNA monomer. PCNA stimulates the nuclease activity without altering cleavage specificity. The cofactor is Mg(2+). Post-translationally, phosphorylated. Phosphorylation upon DNA damage induces relocalization to the nuclear plasma.

It localises to the nucleus. It is found in the nucleolus. The protein localises to the nucleoplasm. The protein resides in the mitochondrion. In terms of biological role, structure-specific nuclease with 5'-flap endonuclease and 5'-3' exonuclease activities involved in DNA replication and repair. During DNA replication, cleaves the 5'-overhanging flap structure that is generated by displacement synthesis when DNA polymerase encounters the 5'-end of a downstream Okazaki fragment. It enters the flap from the 5'-end and then tracks to cleave the flap base, leaving a nick for ligation. Also involved in the long patch base excision repair (LP-BER) pathway, by cleaving within the apurinic/apyrimidinic (AP) site-terminated flap. Acts as a genome stabilization factor that prevents flaps from equilibrating into structures that lead to duplications and deletions. Also possesses 5'-3' exonuclease activity on nicked or gapped double-stranded DNA, and exhibits RNase H activity. Also involved in replication and repair of rDNA and in repairing mitochondrial DNA. The protein is Flap endonuclease 1 (fen1) of Xenopus tropicalis (Western clawed frog).